Consider the following 352-residue polypeptide: Holliday junction branch migration complex subunit RuvB (352 aa).

A large ATPase domain (RuvB-L) region spans residues 1-181 (MTDRIVGAAK…FGIPVRLHFY (181 aa)). ATP-binding positions include Leu-20, Arg-21, Gly-62, Lys-65, Thr-66, Thr-67, 128 to 130 (EDF), Arg-171, Tyr-181, and Arg-218. Thr-66 provides a ligand contact to Mg(2+). The small ATPAse domain (RuvB-S) stretch occupies residues 182-252 (EVAELEGIVR…AADKALQRLE (71 aa)). Residues 255 to 352 (ELGLDALDHR…FDGDEENGSA (98 aa)) form a head domain (RuvB-H) region. Residues Arg-291, Arg-310, and Arg-315 each coordinate DNA.

The protein belongs to the RuvB family. In terms of assembly, homohexamer. Forms an RuvA(8)-RuvB(12)-Holliday junction (HJ) complex. HJ DNA is sandwiched between 2 RuvA tetramers; dsDNA enters through RuvA and exits via RuvB. An RuvB hexamer assembles on each DNA strand where it exits the tetramer. Each RuvB hexamer is contacted by two RuvA subunits (via domain III) on 2 adjacent RuvB subunits; this complex drives branch migration. In the full resolvosome a probable DNA-RuvA(4)-RuvB(12)-RuvC(2) complex forms which resolves the HJ.

The protein resides in the cytoplasm. It catalyses the reaction ATP + H2O = ADP + phosphate + H(+). The RuvA-RuvB-RuvC complex processes Holliday junction (HJ) DNA during genetic recombination and DNA repair, while the RuvA-RuvB complex plays an important role in the rescue of blocked DNA replication forks via replication fork reversal (RFR). RuvA specifically binds to HJ cruciform DNA, conferring on it an open structure. The RuvB hexamer acts as an ATP-dependent pump, pulling dsDNA into and through the RuvAB complex. RuvB forms 2 homohexamers on either side of HJ DNA bound by 1 or 2 RuvA tetramers; 4 subunits per hexamer contact DNA at a time. Coordinated motions by a converter formed by DNA-disengaged RuvB subunits stimulates ATP hydrolysis and nucleotide exchange. Immobilization of the converter enables RuvB to convert the ATP-contained energy into a lever motion, pulling 2 nucleotides of DNA out of the RuvA tetramer per ATP hydrolyzed, thus driving DNA branch migration. The RuvB motors rotate together with the DNA substrate, which together with the progressing nucleotide cycle form the mechanistic basis for DNA recombination by continuous HJ branch migration. Branch migration allows RuvC to scan DNA until it finds its consensus sequence, where it cleaves and resolves cruciform DNA. This Parvibaculum lavamentivorans (strain DS-1 / DSM 13023 / NCIMB 13966) protein is Holliday junction branch migration complex subunit RuvB.